A 126-amino-acid polypeptide reads, in one-letter code: uncharacterized protein (126 aa).

Basic residues-rich tracts occupy residues 21–31 (RKKRKKRKKRR) and 41–83 (RILK…RKRR). A disordered region spans residues 21–83 (RKKRKKRKKR…RSPRKRRKRR (63 aa)).

This is an uncharacterized protein from Saccharomyces cerevisiae (strain ATCC 204508 / S288c) (Baker's yeast).